We begin with the raw amino-acid sequence, 268 residues long: Hydroxyethylthiazole kinase (268 aa).

Methionine 49 serves as a coordination point for substrate. ATP is bound by residues lysine 124 and threonine 168. A substrate-binding site is contributed by alanine 195.

It belongs to the Thz kinase family. Requires Mg(2+) as cofactor.

It carries out the reaction 5-(2-hydroxyethyl)-4-methylthiazole + ATP = 4-methyl-5-(2-phosphooxyethyl)-thiazole + ADP + H(+). Its pathway is cofactor biosynthesis; thiamine diphosphate biosynthesis; 4-methyl-5-(2-phosphoethyl)-thiazole from 5-(2-hydroxyethyl)-4-methylthiazole: step 1/1. In terms of biological role, catalyzes the phosphorylation of the hydroxyl group of 4-methyl-5-beta-hydroxyethylthiazole (THZ). This is Hydroxyethylthiazole kinase from Archaeoglobus fulgidus (strain ATCC 49558 / DSM 4304 / JCM 9628 / NBRC 100126 / VC-16).